The primary structure comprises 528 residues: tRNA pseudouridine synthase 1 (528 aa).

Residues Met1–Ser18 show a composition bias toward polar residues. The interval Met1–Val80 is disordered. A compositionally biased stretch (basic and acidic residues) spans Asp49–Val80. The active-site Nucleophile is the Asp144. The span at Lys505–Glu515 shows a compositional bias: basic and acidic residues. Residues Lys505 to Gly528 are disordered. Over residues Glu516–Gly528 the composition is skewed to acidic residues.

It belongs to the tRNA pseudouridine synthase TruA family. It depends on Zn(2+) as a cofactor.

Its subcellular location is the nucleus. It carries out the reaction a uridine in tRNA = a pseudouridine in tRNA. The catalysed reaction is uridine in snRNA = pseudouridine in snRNA. The enzyme catalyses a uridine in mRNA = a pseudouridine in mRNA. In terms of biological role, formation of pseudouridine at positions 27 and 28 in the anticodon stem and loop of transfer RNAs; at positions 34 and 36 of intron-containing precursor tRNA(Ile) and at position 35 in the intron-containing tRNA(Tyr). Catalyzes pseudouridylation at position 44 in U2 snRNA. Also catalyzes pseudouridylation of mRNAs. This is tRNA pseudouridine synthase 1 (PUS1) from Yarrowia lipolytica (strain CLIB 122 / E 150) (Yeast).